The following is a 347-amino-acid chain: Protein pelota homolog (347 aa).

This sequence belongs to the eukaryotic release factor 1 family. Pelota subfamily. In terms of assembly, monomer. It depends on a divalent metal cation as a cofactor.

It is found in the cytoplasm. May function in recognizing stalled ribosomes, interact with stem-loop structures in stalled mRNA molecules, and effect endonucleolytic cleavage of the mRNA. May play a role in the release non-functional ribosomes and degradation of damaged mRNAs. Has endoribonuclease activity. This is Protein pelota homolog from Methanothrix thermoacetophila (strain DSM 6194 / JCM 14653 / NBRC 101360 / PT) (Methanosaeta thermophila).